The following is a 125-amino-acid chain: Large ribosomal subunit protein eL31 (125 aa).

It belongs to the eukaryotic ribosomal protein eL31 family. In terms of assembly, component of the large ribosomal subunit.

The protein resides in the cytoplasm. In terms of biological role, component of the large ribosomal subunit. The ribosome is a large ribonucleoprotein complex responsible for the synthesis of proteins in the cell. This chain is Large ribosomal subunit protein eL31 (rpl31), found in Ictalurus punctatus (Channel catfish).